Reading from the N-terminus, the 78-residue chain is Kassorin-S (78 aa).

A signal peptide spans 1-22 (MLTLKKSMLLLFFLGMVSLSLA). Positions 23 to 64 (NSKRADEEGEDKRADEEGEDKRADEEGEDKRADEEGEEKRKR) are excised as a propeptide. The tract at residues 24 to 60 (SKRADEEGEDKRADEEGEDKRADEEGEDKRADEEGEE) is disordered. Over residues 25–60 (KRADEEGEDKRADEEGEDKRADEEGEDKRADEEGEE) the composition is skewed to basic and acidic residues. A Leucine amide modification is found at Leu-77.

This sequence belongs to the frog skin active peptide (FSAP) family. Brevinin subfamily. In terms of tissue distribution, expressed by the skin glands.

The protein resides in the secreted. Functionally, antimicrobial peptide. Active against the Gram-positive bacterium S.aureus (MIC=30 uM) and the yeast C.albicans (MIC=100 uM). Not effective against the Gram-negative bacterium E.coli at concentrations up to 250 uM. Lacks ability to induce contraction of smooth muscle in isolated guinea pig urinary bladder. Elicits histamine release from rat peritoneal mast cells. The polypeptide is Kassorin-S (Kassina senegalensis (Senegal running frog)).